Reading from the N-terminus, the 496-residue chain is Steroid 21-hydroxylase (496 aa).

S109 lines the heme b pocket. R232 lines the 17alpha-hydroxyprogesterone pocket. R232 serves as a coordination point for progesterone. Positions 364, 425, and 427 each coordinate heme b.

Belongs to the cytochrome P450 family. Heme b serves as cofactor.

The protein resides in the endoplasmic reticulum membrane. It localises to the microsome membrane. It catalyses the reaction progesterone + reduced [NADPH--hemoprotein reductase] + O2 = 21-hydroxyprogesterone + oxidized [NADPH--hemoprotein reductase] + H2O + H(+). The catalysed reaction is 17alpha-hydroxyprogesterone + reduced [NADPH--hemoprotein reductase] + O2 = 11-deoxycortisol + oxidized [NADPH--hemoprotein reductase] + H2O + H(+). Its function is as follows. A cytochrome P450 monooxygenase that plays a major role in adrenal steroidogenesis. Catalyzes the hydroxylation at C-21 of progesterone and 17alpha-hydroxyprogesterone to respectively form 11-deoxycorticosterone and 11-deoxycortisol, intermediate metabolites in the biosynthetic pathway of mineralocorticoids and glucocorticoids. Mechanistically, uses molecular oxygen inserting one oxygen atom into a substrate, and reducing the second into a water molecule, with two electrons provided by NADPH via cytochrome P450 reductase (CPR; NADPH-ferrihemoprotein reductase). This is Steroid 21-hydroxylase (CYP21) from Bos taurus (Bovine).